The sequence spans 313 residues: 4-hydroxy-3-methylbut-2-enyl diphosphate reductase (313 aa).

[4Fe-4S] cluster is bound at residue C14. Residues H43 and H76 each contribute to the (2E)-4-hydroxy-3-methylbut-2-enyl diphosphate site. 2 residues coordinate dimethylallyl diphosphate: H43 and H76. Residues H43 and H76 each contribute to the isopentenyl diphosphate site. C98 is a [4Fe-4S] cluster binding site. Residue H126 participates in (2E)-4-hydroxy-3-methylbut-2-enyl diphosphate binding. H126 lines the dimethylallyl diphosphate pocket. H126 contributes to the isopentenyl diphosphate binding site. E128 functions as the Proton donor in the catalytic mechanism. Residue T166 participates in (2E)-4-hydroxy-3-methylbut-2-enyl diphosphate binding. A [4Fe-4S] cluster-binding site is contributed by C196. (2E)-4-hydroxy-3-methylbut-2-enyl diphosphate contacts are provided by S224, S225, N226, and S269. Residues S224, S225, N226, and S269 each contribute to the dimethylallyl diphosphate site. 4 residues coordinate isopentenyl diphosphate: S224, S225, N226, and S269.

It belongs to the IspH family. Requires [4Fe-4S] cluster as cofactor.

It carries out the reaction isopentenyl diphosphate + 2 oxidized [2Fe-2S]-[ferredoxin] + H2O = (2E)-4-hydroxy-3-methylbut-2-enyl diphosphate + 2 reduced [2Fe-2S]-[ferredoxin] + 2 H(+). The enzyme catalyses dimethylallyl diphosphate + 2 oxidized [2Fe-2S]-[ferredoxin] + H2O = (2E)-4-hydroxy-3-methylbut-2-enyl diphosphate + 2 reduced [2Fe-2S]-[ferredoxin] + 2 H(+). Its pathway is isoprenoid biosynthesis; dimethylallyl diphosphate biosynthesis; dimethylallyl diphosphate from (2E)-4-hydroxy-3-methylbutenyl diphosphate: step 1/1. It functions in the pathway isoprenoid biosynthesis; isopentenyl diphosphate biosynthesis via DXP pathway; isopentenyl diphosphate from 1-deoxy-D-xylulose 5-phosphate: step 6/6. In terms of biological role, catalyzes the conversion of 1-hydroxy-2-methyl-2-(E)-butenyl 4-diphosphate (HMBPP) into a mixture of isopentenyl diphosphate (IPP) and dimethylallyl diphosphate (DMAPP). Acts in the terminal step of the DOXP/MEP pathway for isoprenoid precursor biosynthesis. This chain is 4-hydroxy-3-methylbut-2-enyl diphosphate reductase, found in Tropheryma whipplei (strain TW08/27) (Whipple's bacillus).